Reading from the N-terminus, the 128-residue chain is Large ribosomal subunit protein bL17 (128 aa).

Belongs to the bacterial ribosomal protein bL17 family. Part of the 50S ribosomal subunit. Contacts protein L32.

The chain is Large ribosomal subunit protein bL17 from Pseudomonas savastanoi pv. phaseolicola (strain 1448A / Race 6) (Pseudomonas syringae pv. phaseolicola (strain 1448A / Race 6)).